A 520-amino-acid chain; its full sequence is Fusaridione A cluster transcription factor fsdR (520 aa).

Residues 1–30 (MSTGPPSGISLVSMTTPRKSGQHTPESWSK) form a disordered region.

The protein localises to the nucleus. In terms of biological role, transcription factor that regulates the expression of the gene cluster that mediates the biosynthesis of fusaridione A. This Fusarium heterosporum protein is Fusaridione A cluster transcription factor fsdR.